We begin with the raw amino-acid sequence, 235 residues long: Carboxy-S-adenosyl-L-methionine synthase (235 aa).

S-adenosyl-L-methionine is bound by residues tyrosine 35, 60-62, 83-84, asparagine 124, and arginine 191; these read GCS and DN.

Belongs to the class I-like SAM-binding methyltransferase superfamily. Cx-SAM synthase family. In terms of assembly, homodimer.

It carries out the reaction prephenate + S-adenosyl-L-methionine = carboxy-S-adenosyl-L-methionine + 3-phenylpyruvate + H2O. In terms of biological role, catalyzes the conversion of S-adenosyl-L-methionine (SAM) to carboxy-S-adenosyl-L-methionine (Cx-SAM). This chain is Carboxy-S-adenosyl-L-methionine synthase, found in Campylobacter jejuni subsp. doylei (strain ATCC BAA-1458 / RM4099 / 269.97).